The sequence spans 54 residues: LVTVDCSDYPKPSCTLEDKPLCGSDNQTYSNKCSFCNAVVDSNGTLTLSHFGKC.

Positions 4-54 (VDCSDYPKPSCTLEDKPLCGSDNQTYSNKCSFCNAVVDSNGTLTLSHFGKC) constitute a Kazal-like domain. 3 cysteine pairs are disulfide-bonded: Cys-6–Cys-36, Cys-14–Cys-33, and Cys-22–Cys-54. Asn-43 is a glycosylation site (N-linked (GlcNAc...) asparagine).

It is found in the secreted. The polypeptide is Ovomucoid (Megapodius freycinet (Dusky scrubfowl)).